Consider the following 85-residue polypeptide: Alpha-toxin BmalphaTx47 (85 aa).

The N-terminal stretch at 1–19 (MNYLIVISFALLLMTGVQS) is a signal peptide. The 63-residue stretch at 21–83 (RDAYIADSEN…VPIRISGSCR (63 aa)) folds into the LCN-type CS-alpha/beta domain. 4 disulfides stabilise this stretch: cysteine 31/cysteine 82, cysteine 35/cysteine 55, cysteine 41/cysteine 65, and cysteine 45/cysteine 67.

Belongs to the long (4 C-C) scorpion toxin superfamily. Sodium channel inhibitor family. Alpha subfamily. Expressed by the venom gland.

Its subcellular location is the secreted. Functionally, alpha toxins bind voltage-independently at site-3 of sodium channels (Nav) and inhibit the inactivation of the activated channels, thereby blocking neuronal transmission. This toxin expressed with the pET-14b vector has low inhibitory activity on sodium channels (11.33% on rNav1.2/SCN2A, 15.96% on mNav1.4/SCN4A and 5.04% on hNav1.5/SCN5A). When expressed with the pET-28a vector, this toxin has higher inhibitory activities (44.12% on rNav1.2/SCN2A, 25.40% on mNav1.4/SCN4A and 65.34% on hNav1.5/SCN5A). This chain is Alpha-toxin BmalphaTx47, found in Olivierus martensii (Manchurian scorpion).